The following is a 373-amino-acid chain: P2Y purinoceptor 1 (373 aa).

Residues 1–51 are Extracellular-facing; it reads MTEVLWPAVPNGTDAAFLAGPGSSWGNSTVASTAAVSSSFKCALTKTGFQF. Residues N11 and N27 are each glycosylated (N-linked (GlcNAc...) asparagine). Intrachain disulfides connect C42–C296 and C124–C202. Position 46 (K46) interacts with ADP. A helical membrane pass occupies residues 52–74; it reads YYLPAVYILVFIIGFLGNSVAIW. Residues 75 to 87 lie on the Cytoplasmic side of the membrane; the sequence is MFVFHMKPWSGIS. The chain crosses the membrane as a helical span at residues 88–109; it reads VYMFNLALADFLYVLTLPALIF. The Extracellular segment spans residues 110 to 125; the sequence is YYFNKTDWIFGDAMCK. N-linked (GlcNAc...) asparagine glycosylation is present at N113. Residues 126–147 form a helical membrane-spanning segment; it reads LQRFIFHVNLYGSILFLTCISA. Residues 148-166 lie on the Cytoplasmic side of the membrane; the sequence is HRYSGVVYPLKSLGRLKKK. Residues 167–188 traverse the membrane as a helical segment; that stretch reads NAICISVLVWLIVVVAISPILF. The Extracellular portion of the chain corresponds to 189-214; sequence YSGTGVRKNKTITCYDTTSDEYLRSY. N-linked (GlcNAc...) asparagine glycosylation is present at N197. An ADP-binding site is contributed by 203 to 205; it reads YDT. A helical membrane pass occupies residues 215 to 237; the sequence is FIYSMCTTVAMFCVPLVLILGCY. Residues 238 to 260 are Cytoplasmic-facing; it reads GLIVRALIYKDLDNSPLRRKSIY. A helical membrane pass occupies residues 261 to 284; that stretch reads LVIIVLTVFAVSYIPFHVMKTMNL. ADP contacts are provided by residues 283 to 287, 303 to 306, and R310; these read NLRAR and YATY. Topologically, residues 285 to 303 are extracellular; the sequence is RARLDFQTPAMCAFNDRVY. Residues 304–325 traverse the membrane as a helical segment; that stretch reads ATYQVTRGLASLNSCVDPILYF. Residues 326-373 lie on the Cytoplasmic side of the membrane; it reads LAGDTFRRRLSRATRKASRRSEANLQSKSEDMTLNILPEFKQNGDTSL.

It belongs to the G-protein coupled receptor 1 family.

The protein localises to the cell membrane. ATP functions as antagonist and inhibits ADP-induced mobilization of Ca(2+). The P2Y1 receptor-specific antagonists A3P5PS, A3P5P and A2P5P inhibit downstream signaling mediated by mobilization of Ca(2+) from intracellular stores, and platelet shape changes in response to extracellular ADP. In terms of biological role, receptor for extracellular adenine nucleotides such as ADP. In platelets, binding to ADP leads to mobilization of intracellular calcium ions via activation of phospholipase C, a change in platelet shape, and ultimately platelet aggregation. The protein is P2Y purinoceptor 1 (P2RY1) of Homo sapiens (Human).